A 420-amino-acid chain; its full sequence is Protein translocase subunit SecY (420 aa).

10 helical membrane passes run 9–29 (ILIT…PIPG), 61–81 (LSII…MELL), 104–124 (IVRY…SVGL), 141–161 (VFMI…MWIG), 173–193 (ISLI…SGTF), 203–223 (ILML…IIYV), 257–277 (LSGV…STIL), 300–320 (YNIL…SIVF), 355–375 (KLTL…WILV), and 377–397 (AMGV…QVAI).

The protein belongs to the SecY/SEC61-alpha family. In terms of assembly, component of the Sec protein translocase complex. Heterotrimer consisting of SecY, SecE and SecG subunits. The heterotrimers can form oligomers, although 1 heterotrimer is thought to be able to translocate proteins. Interacts with the ribosome. Interacts with SecDF, and other proteins may be involved. Interacts with SecA.

Its subcellular location is the cell inner membrane. Its function is as follows. The central subunit of the protein translocation channel SecYEG. Consists of two halves formed by TMs 1-5 and 6-10. These two domains form a lateral gate at the front which open onto the bilayer between TMs 2 and 7, and are clamped together by SecE at the back. The channel is closed by both a pore ring composed of hydrophobic SecY resides and a short helix (helix 2A) on the extracellular side of the membrane which forms a plug. The plug probably moves laterally to allow the channel to open. The ring and the pore may move independently. The sequence is that of Protein translocase subunit SecY from Helicobacter pylori (strain ATCC 700392 / 26695) (Campylobacter pylori).